The primary structure comprises 311 residues: Systemic RNA interference defective protein 2 (311 aa).

The signal sequence occupies residues 1–20 (MPRFVYFCFALIALLPISWT). At 21 to 188 (MDGILITDVE…EETKTVVNKN (168 aa)) the chain is on the extracellular side. A helical transmembrane segment spans residues 189–209 (GGAVAVAVIEGIALIAILAFL). The Cytoplasmic segment spans residues 210–311 (GYRTMVNHKL…NDPFATLESW (102 aa)). The span at 287–301 (NSSAAQPSTTSNGQF) shows a compositional bias: polar residues. Positions 287-311 (NSSAAQPSTTSNGQFNDPFATLESW) are disordered.

In terms of tissue distribution, expressed in the intestinal lumen. Also present, at lower levels, in the excretory duct cells.

The protein resides in the apical cell membrane. It is found in the cytoplasm. In terms of biological role, plays a role in RNA-mediated gene silencing by mediating endocytic uptake of double-stranded RNA (dsRNA) ingested from the environment into intestinal cells from the intestinal lumen. Selective for dsRNAs of at least 50 bp. Required for avoidance behavior induced by small RNAs derived from pathogenic bacteria such as P.aeruginosa. The protein is Systemic RNA interference defective protein 2 of Caenorhabditis elegans.